A 937-amino-acid chain; its full sequence is Glycine dehydrogenase (decarboxylating) (937 aa).

K686 is subject to N6-(pyridoxal phosphate)lysine.

Belongs to the GcvP family. As to quaternary structure, the glycine cleavage system is composed of four proteins: P, T, L and H. It depends on pyridoxal 5'-phosphate as a cofactor.

It catalyses the reaction N(6)-[(R)-lipoyl]-L-lysyl-[glycine-cleavage complex H protein] + glycine + H(+) = N(6)-[(R)-S(8)-aminomethyldihydrolipoyl]-L-lysyl-[glycine-cleavage complex H protein] + CO2. In terms of biological role, the glycine cleavage system catalyzes the degradation of glycine. The P protein binds the alpha-amino group of glycine through its pyridoxal phosphate cofactor; CO(2) is released and the remaining methylamine moiety is then transferred to the lipoamide cofactor of the H protein. This Mesorhizobium japonicum (strain LMG 29417 / CECT 9101 / MAFF 303099) (Mesorhizobium loti (strain MAFF 303099)) protein is Glycine dehydrogenase (decarboxylating).